Here is a 176-residue protein sequence, read N- to C-terminus: Conidiation-specific protein 8 (176 aa).

2 disordered regions span residues 1–66 (MDDT…SKLI) and 79–162 (AASE…PQGF). Positions 79–99 (AASEAFRSERSASTSSTTSET) are enriched in low complexity.

The sequence is that of Conidiation-specific protein 8 (con-8) from Neurospora crassa (strain ATCC 24698 / 74-OR23-1A / CBS 708.71 / DSM 1257 / FGSC 987).